The sequence spans 179 residues: Inner membrane-spanning protein YciB (179 aa).

A run of 5 helical transmembrane segments spans residues 22–42 (IYAA…YSWV), 50–70 (MALI…FFHN), 76–96 (WKVT…QWVM), 121–141 (LAWA…AFWL), and 149–169 (FKVF…GIYI).

The protein belongs to the YciB family.

It is found in the cell inner membrane. In terms of biological role, plays a role in cell envelope biogenesis, maintenance of cell envelope integrity and membrane homeostasis. The chain is Inner membrane-spanning protein YciB from Shigella boydii serotype 4 (strain Sb227).